The sequence spans 306 residues: UDP-N-acetylenolpyruvoylglucosamine reductase (306 aa).

Positions 34-198 (VGGPADLLIT…LEVTFKLHNS (165 aa)) constitute an FAD-binding PCMH-type domain. Arg177 is a catalytic residue. Ser227 serves as the catalytic Proton donor. Glu297 is a catalytic residue.

The protein belongs to the MurB family. Requires FAD as cofactor.

The protein localises to the cytoplasm. It carries out the reaction UDP-N-acetyl-alpha-D-muramate + NADP(+) = UDP-N-acetyl-3-O-(1-carboxyvinyl)-alpha-D-glucosamine + NADPH + H(+). It functions in the pathway cell wall biogenesis; peptidoglycan biosynthesis. Functionally, cell wall formation. The protein is UDP-N-acetylenolpyruvoylglucosamine reductase of Clostridium botulinum (strain Okra / Type B1).